Consider the following 391-residue polypeptide: Ferrochelatase (391 aa).

Residues His-196 and Glu-281 each contribute to the Fe cation site.

It belongs to the ferrochelatase family.

It is found in the cytoplasm. It catalyses the reaction heme b + 2 H(+) = protoporphyrin IX + Fe(2+). Its pathway is porphyrin-containing compound metabolism; protoheme biosynthesis; protoheme from protoporphyrin-IX: step 1/1. In terms of biological role, catalyzes the ferrous insertion into protoporphyrin IX. In Prochlorococcus marinus (strain MIT 9515), this protein is Ferrochelatase.